The following is a 1154-amino-acid chain: MAGAGYQHHPPGGAAVGTSAVSPTAAGPGEDSSDSEAEQGGPQKLIRKVSTSGQIRTKTSIKEGQLLKQTSSFQRWKKRYFKLRGRTLYYAKDSKSLIFDEVDLSDASVAEASTKNANNSFTIITPFRRLMLCAENRKEMEDWISSLKSVQSREPYEVAQFNVEHFSGMHNWYACSHARPTFCNVCRESLSGVTSHGLSCEVCKFKAHKRCAVRATNNCKWTTLASIGKDIIEDEDGVAMPHQWLEGNLPVSAKCAVCDKTCGSVLRLQDWKCLWCKAMVHTACKDLYHPVCPLGQCKVSIIPPIALNSTDSDGFCRATFSFCVSPLLVFVNSKSGDNQGVKFLRRFKQLLNPAQVFDLMNGGPHLGLRLFQKFDNFRILVCGGDGSVGWVLSEIDKLNLNKQCQLGVLPLGTGNDLARVLGWGGSYDDDTQLPQILEKLERASTKMLDRWSIMTYELKLPAKASLLPEPPEASGGFYMTIYEDSVANHLTKILNSDEHAVVISSAKILCETVKDFVAKVEKAQDKTLENTVVAEAVANKCSVLNEKLEQLLQALHADAQASRVPPGVGPAIPEEDAVESSSEESLGESKDQLVNDIAKPSSQKAVKPREIMLRANSLKKAVRQVIEEAGKVMDEQTVQPCEPVSPSCDYDSPEADDSKDNDTKESPAAKSTSQAPEAQAIRGHFQTDSVAGSAMATTKENLPVLNTRIICPGLRAGLAASIAGSSIINKMLLANIDPFGATPFIDPDLDSLDGYSEKCVMNNYFGIGLDAKISLEFNNKREEHPEKCRSRTKNLMWYGVLGTRELLQRSYKNLEQRVQLECDGQYIPLPSLQGIAVLNIPSYAGGTNFWGGTKEDDIFAAPSFDDKILEVVAVFDSVQMAVSRVIKLQHHRIAQCRTVKITIFGDEGVPVQVDGEAWVQPPGIIKIVHKNRAQMLTRDRAFESTLKSWEDKQKCDSGKPVLRTNLYIHPAADLATEEVSQMRLCSQAAEELITRICDAATIHCLLGAGTGSSVNACSHALNKANPRFPESLTRDTATEIAINVKALYNETESLLVGRVPLQLESPHEERVSSALHSVEVELQKLTEIPWLYYILRPNEDEEPPMDCTKRNSKSTVFRIVPKFKMEKAQKQKTSSQPGPGDTESGSYEANSPGN.

Residues 1–54 (MAGAGYQHHPPGGAAVGTSAVSPTAAGPGEDSSDSEAEQGGPQKLIRKVSTSGQ) are disordered. The region spanning 59 to 152 (TSIKEGQLLK…WISSLKSVQS (94 aa)) is the PH domain. Phorbol-ester/DAG-type zinc fingers lie at residues 169–219 (MHNW…TNNC) and 241–292 (PHQW…HPVC). In terms of domain architecture, DAGKc spans 322-457 (FCVSPLLVFV…LDRWSIMTYE (136 aa)). Disordered regions lie at residues 560–608 (QASR…AVKP), 634–678 (DEQT…APEA), and 1123–1154 (FKMEKAQKQKTSSQPGPGDTESGSYEANSPGN). The span at 573-586 (PEEDAVESSSEESL) shows a compositional bias: acidic residues. The segment covering 656 to 667 (DDSKDNDTKESP) has biased composition (basic and acidic residues). Polar residues predominate over residues 1131–1154 (QKTSSQPGPGDTESGSYEANSPGN).

Belongs to the eukaryotic diacylglycerol kinase family. As to quaternary structure, interacts with RAF1 and BRAF. Post-translationally, phosphorylated. Phosphorylation does not inhibit catalytic activity. In terms of tissue distribution, expressed in a wide variety of tissues. Most abundant in the brain and testis; also found in lung, spleen, and prostate (at protein level).

It is found in the cytoplasm. The protein resides in the cell membrane. It carries out the reaction a 1,2-diacyl-sn-glycerol + ATP = a 1,2-diacyl-sn-glycero-3-phosphate + ADP + H(+). It catalyses the reaction 1,2-di-(9Z-octadecenoyl)-sn-glycerol + ATP = 1,2-di-(9Z-octadecenoyl)-sn-glycero-3-phosphate + ADP + H(+). Its pathway is lipid metabolism; glycerolipid metabolism. Functionally, diacylglycerol kinase that converts diacylglycerol/DAG into phosphatidic acid/phosphatidate/PA and regulates the respective levels of these two bioactive lipids. Thereby, acts as a central switch between the signaling pathways activated by these second messengers with different cellular targets and opposite effects in numerous biological processes. Plays a key role in promoting cell growth. Activates the Ras/B-Raf/C-Raf/MEK/ERK signaling pathway induced by EGF. Regulates the recruitment of RAF1 and BRAF from cytoplasm to membranes and their heterodimerization. This is Diacylglycerol kinase eta (DGKH) from Mesocricetus auratus (Golden hamster).